The chain runs to 90 residues: Small ribosomal subunit protein uS15c (90 aa).

This sequence belongs to the universal ribosomal protein uS15 family. Part of the 30S ribosomal subunit.

It is found in the plastid. The protein resides in the chloroplast. In Secale cereale (Rye), this protein is Small ribosomal subunit protein uS15c (rps15).